The chain runs to 246 residues: Probable ABC transporter permease protein BMEII0107 (246 aa).

Helical transmembrane passes span 12-32 (LLSF…GAVV), 63-83 (VLSG…LMGW), 94-114 (WVQF…IVTL), 122-142 (IFVI…QGVI), 172-192 (VPFI…TVVA), and 211-231 (LYYD…LGLF). The ABC transmembrane type-1 domain occupies 56–236 (IFASLRRVLS…ILGLFMDRLL (181 aa)).

This sequence belongs to the binding-protein-dependent transport system permease family. In terms of assembly, the complex is composed of two ATP-binding proteins (BMEII0108), two transmembrane proteins (BMEII0107) and a solute-binding protein (BMEII0109).

It localises to the cell inner membrane. Its function is as follows. Probably part of an ABC transporter complex. Probably responsible for the translocation of the substrate across the membrane. In Brucella melitensis biotype 1 (strain ATCC 23456 / CCUG 17765 / NCTC 10094 / 16M), this protein is Probable ABC transporter permease protein BMEII0107.